Here is a 718-residue protein sequence, read N- to C-terminus: MEDLGENTMVLSTLRSLNNFISQRVEGGSGLDISTSAPGSLQMQYQQSMQLEERAEQIRSKSHLIQVEREKMQMELSHKRARVELERAASTSARNYEREVDRNQELLTRIRQLQEREAGAEEKMQEQLERNRQCQQNLDAASKRLREKEDSLAQAGETINALKGRISELQWSVMDQEMRVKRLESEKQELQEQLDLQHKKCQEANQKIQELQASQEARADHEQQIKDLEQKLSLQEQDAAIVKNMKSELVRLPRLERELKQLREESAHLREMRETNGLLQEELEGLQRKLGRQEKMQETLVGLELENERLLAKLQSWERLDQTMGLSIRTPEDLSRFVVELQQRELALKDKNSAVTSSARGLEKARQQLQEELRQVSGQLLEERKKRETHEALARRLQKRVLLLTKERDGMRAILGSYDSELTPAEYSPQLTRRMREAEDMVQKVHSHSAEMEAQLSQALEELGGQKQRADMLEMELKMLKSQSSSAEQSFLFSREEADTLRLKVEELEGERSRLEEEKRMLEAQLERRALQGDYDQSRTKVLHMSLNPTSVARQRLREDHSQLQAECERLRGLLRAMERGGTVPADLEAAAASLPSSKEVAELKKQVESAELKNQRLKEVFQTKIQEFRKACYTLTGYQIDITTENQYRLTSLYAEHPGDCLIFKATSPSGSKMQLLETEFSHTVGELIEVHLRRQDSIPAFLSSLTLELFSRQTVA.

Met1 is modified (N-acetylmethionine). The residue at position 16 (Ser16) is a Phosphoserine. Positions 46–632 form a coiled coil; it reads QQSMQLEERA…QTKIQEFRKA (587 aa). Lys61 carries the post-translational modification N6-acetyllysine; alternate. Lys61 is covalently cross-linked (Glycyl lysine isopeptide (Lys-Gly) (interchain with G-Cter in SUMO2); alternate). The short motif at 79–82 is the Nuclear localization signal element; that stretch reads KRAR. Ser214 is subject to Phosphoserine. The tract at residues 301-340 is important for interaction with IK; the sequence is VGLELENERLLAKLQSWERLDQTMGLSIRTPEDLSRFVVE. The interval 380–532 is necessary for interaction with NEK2; the sequence is LLEERKKRET…EAQLERRALQ (153 aa). Ser428 is modified (phosphoserine). Positions 439–480 are important for interaction with IK; that stretch reads EDMVQKVHSHSAEMEAQLSQALEELGGQKQRADMLEMELKML. The interval 540-551 is necessary for interaction with MAD2L1; sequence TKVLHMSLNPTS. A phosphoserine mark is found at Ser598 and Ser610. Tyr634 is subject to Phosphotyrosine. Thr716 is subject to Phosphothreonine.

It belongs to the MAD1 family. In terms of assembly, homodimer. Dimerizes via its N- and C- terminal regions. Heterodimerizes with MAD2L1 in order to form a tetrameric MAD1L1-MAD2L1 core complex. Interacts with the closed conformation form of MAD2L1 (C-MAD2) and open conformation form of MAD2L1 (O-MAD2). It is unclear whether MAD1L1 dimerization promotes the conversion of closed to open conformation of MAD2L1. Formation of a heterotetrameric core complex containing two molecules each of MAD1L1 and of MAD2L1 promotes binding of another molecule of MAD2L1 to each MAD2L1, resulting in a heterohexamer. Perturbation of the original MAD1L1-MAD2L1 structure by the spindle checkpoint may decrease MAD2L1 affinity for MAD1L1. CDC20 can compete with MAD1L1 for MAD2L1 binding, until the attachment and/or tension dampen the checkpoint signal, preventing further release of MAD2L1 on to CDC20. Also able to interact with the BUB1/BUB3 complex. Interacts with NEK2. Interacts with TTK. Interacts with TPR; the interactions occurs in a microtubule-independent manner. Interacts with IK. Interacts with the viral Tax protein. Interacts with PRAP1. As to quaternary structure, interacts with MAD2L1; this interaction leads to the cytoplasmic sequestration of MAD2L1. Interacts with PRAP1. In terms of processing, phosphorylated; by BUB1. Become hyperphosphorylated in late S through M phases or after mitotic spindle damage. Phosphorylated; by TTK. As to expression, expressed in hepatocellular carcinomas and hepatoma cell lines (at protein level).

It is found in the nucleus. Its subcellular location is the chromosome. It localises to the centromere. The protein resides in the kinetochore. The protein localises to the nucleus envelope. It is found in the cytoplasm. Its subcellular location is the cytoskeleton. It localises to the microtubule organizing center. The protein resides in the centrosome. The protein localises to the spindle. It is found in the spindle pole. In terms of biological role, component of the spindle-assembly checkpoint that prevents the onset of anaphase until all chromosomes are properly aligned at the metaphase plate. Forms a heterotetrameric complex with the closed conformation form of MAD2L1 (C-MAD2) at unattached kinetochores during prometaphase, recruits an open conformation of MAD2L1 (O-MAD2) and promotes the conversion of O-MAD2 to C-MAD2, which ensures mitotic checkpoint signaling. Functionally, sequesters MAD2L1 in the cytoplasm preventing its function as an activator of the mitotic spindle assembly checkpoint (SAC) resulting in SAC impairment and chromosomal instability in hepatocellular carcinomas. The chain is Mitotic spindle assembly checkpoint protein MAD1 (MAD1L1) from Homo sapiens (Human).